The sequence spans 138 residues: MRILCLDIGNSRVGVAISDPLKITAQPVMTIELRNKDLFEELDKIFQGYNIEKVVIGYPLSKLHPDQKDEKLKKIDEISEKIGSRYNVEIVKWDERFSTKAVERVIDEELNWKRKKKIIDKVAAVYILQGYLDFYNGS.

The protein belongs to the YqgF nuclease family.

It localises to the cytoplasm. In terms of biological role, could be a nuclease involved in processing of the 5'-end of pre-16S rRNA. This Caldicellulosiruptor bescii (strain ATCC BAA-1888 / DSM 6725 / KCTC 15123 / Z-1320) (Anaerocellum thermophilum) protein is Putative pre-16S rRNA nuclease.